The chain runs to 210 residues: DNA-directed RNA polymerase III subunit rpc31 (210 aa).

The residue at position 103 (Ser103) is a Phosphoserine. The disordered stretch occupies residues Lys151 to Glu210. Acidic residues-rich tracts occupy residues Glu163 to Tyr185 and Gly193 to Glu210.

The protein belongs to the eukaryotic RPC7 RNA polymerase subunit family. As to quaternary structure, component of the RNA polymerase III (Pol III) complex.

It is found in the cytoplasm. The protein localises to the nucleus. In terms of biological role, DNA-dependent RNA polymerase catalyzes the transcription of DNA into RNA using the four ribonucleoside triphosphates as substrates. Specific peripheric component of RNA polymerase III which synthesizes small RNAs, such as 5S rRNA and tRNAs. The chain is DNA-directed RNA polymerase III subunit rpc31 (rpc31) from Schizosaccharomyces pombe (strain 972 / ATCC 24843) (Fission yeast).